The primary structure comprises 341 residues: Holliday junction branch migration complex subunit RuvB (341 aa).

Residues 1–182 (MTDADPTLRP…FGIPTRLLFY (182 aa)) form a large ATPase domain (RuvB-L) region. ATP is bound by residues Leu21, Arg22, Gly63, Lys66, Thr67, Thr68, 129–131 (EDF), Arg172, Tyr182, and Arg219. Thr67 serves as a coordination point for Mg(2+). Residues 183–253 (TVDELFEIVS…LADHALTRLG (71 aa)) form a small ATPAse domain (RuvB-S) region. The head domain (RuvB-H) stretch occupies residues 256–341 (QLGLDGADRR…RPPGQSDLFG (86 aa)). 3 residues coordinate DNA: Arg292, Arg311, and Arg316.

The protein belongs to the RuvB family. In terms of assembly, homohexamer. Forms an RuvA(8)-RuvB(12)-Holliday junction (HJ) complex. HJ DNA is sandwiched between 2 RuvA tetramers; dsDNA enters through RuvA and exits via RuvB. An RuvB hexamer assembles on each DNA strand where it exits the tetramer. Each RuvB hexamer is contacted by two RuvA subunits (via domain III) on 2 adjacent RuvB subunits; this complex drives branch migration. In the full resolvosome a probable DNA-RuvA(4)-RuvB(12)-RuvC(2) complex forms which resolves the HJ.

The protein localises to the cytoplasm. The enzyme catalyses ATP + H2O = ADP + phosphate + H(+). Functionally, the RuvA-RuvB-RuvC complex processes Holliday junction (HJ) DNA during genetic recombination and DNA repair, while the RuvA-RuvB complex plays an important role in the rescue of blocked DNA replication forks via replication fork reversal (RFR). RuvA specifically binds to HJ cruciform DNA, conferring on it an open structure. The RuvB hexamer acts as an ATP-dependent pump, pulling dsDNA into and through the RuvAB complex. RuvB forms 2 homohexamers on either side of HJ DNA bound by 1 or 2 RuvA tetramers; 4 subunits per hexamer contact DNA at a time. Coordinated motions by a converter formed by DNA-disengaged RuvB subunits stimulates ATP hydrolysis and nucleotide exchange. Immobilization of the converter enables RuvB to convert the ATP-contained energy into a lever motion, pulling 2 nucleotides of DNA out of the RuvA tetramer per ATP hydrolyzed, thus driving DNA branch migration. The RuvB motors rotate together with the DNA substrate, which together with the progressing nucleotide cycle form the mechanistic basis for DNA recombination by continuous HJ branch migration. Branch migration allows RuvC to scan DNA until it finds its consensus sequence, where it cleaves and resolves cruciform DNA. This Ruegeria pomeroyi (strain ATCC 700808 / DSM 15171 / DSS-3) (Silicibacter pomeroyi) protein is Holliday junction branch migration complex subunit RuvB.